Reading from the N-terminus, the 174-residue chain is Stigma-specific STIG1-like protein 4 (174 aa).

Residues 1-25 (MMSIKLTLCALIFFLLNSLLHHVLG) form the signal peptide. Residues 140 to 174 (PSSQPGKRHRRHKFHRPRPPPSPDSKLNYDDHDDE) are disordered. Residues 145 to 157 (GKRHRRHKFHRPR) are compositionally biased toward basic residues.

Belongs to the STIG1 family.

It localises to the secreted. In terms of biological role, endosperm-specific cysteine-rich protein that acts downstream of BHLH95/ZOU to modify the interface between embryo and endosperm and mediate the separation of these two tissues during seed development. Necessary for the biogenesis of the embryo sheath, an extracuticular endosperm-derived structure at the surface of the embryo. Required for the separation of embryo and endosperm, and for normal progression of the embryo through the endosperm tissue. Required for the formation of a normal embryonic cuticle. In Arabidopsis thaliana (Mouse-ear cress), this protein is Stigma-specific STIG1-like protein 4.